The sequence spans 67 residues: DNA-directed RNA polymerase subunit omega (67 aa).

The protein belongs to the RNA polymerase subunit omega family. In terms of assembly, the RNAP catalytic core consists of 2 alpha, 1 beta, 1 beta' and 1 omega subunit. When a sigma factor is associated with the core the holoenzyme is formed, which can initiate transcription.

The catalysed reaction is RNA(n) + a ribonucleoside 5'-triphosphate = RNA(n+1) + diphosphate. Promotes RNA polymerase assembly. Latches the N- and C-terminal regions of the beta' subunit thereby facilitating its interaction with the beta and alpha subunits. This chain is DNA-directed RNA polymerase subunit omega, found in Paracidovorax citrulli (strain AAC00-1) (Acidovorax citrulli).